We begin with the raw amino-acid sequence, 405 residues long: Scarecrow-like protein 23 (405 aa).

The segment at methionine 1–lysine 20 is disordered. Residues glutamate 31–lysine 400 form the GRAS domain. Residues isoleucine 38 to serine 102 form a leucine repeat I (LRI) region. Positions leucine 45–glutamate 49 match the LxCxE motif motif. Positions leucine 121–glycine 186 are VHIID. Residues valine 152–aspartate 156 carry the VHIID motif. The tract at residues serine 196–serine 228 is leucine repeat II (LRII). Residues valine 238–asparagine 327 form a PFYRE region. The tract at residues alanine 330–lysine 400 is SAW.

The protein belongs to the GRAS family. As to quaternary structure, interacts with SHR. Expressed in seedlings, cotyledons, shoot apex, leaves and flowers.

It is found in the nucleus. Its function is as follows. Probable transcription factor involved in plant development. The protein is Scarecrow-like protein 23 (SCL23) of Arabidopsis thaliana (Mouse-ear cress).